Reading from the N-terminus, the 287-residue chain is Large ribosomal subunit protein uL2 (287 aa).

The interval 221 to 287 (RGSVMNPCDH…SKRSRGGRDS (67 aa)) is disordered. Residues 258–287 (KTRKKNKPSNKLVVRRRRRISKRSRGGRDS) show a composition bias toward basic residues.

Belongs to the universal ribosomal protein uL2 family. Part of the 50S ribosomal subunit. Forms a bridge to the 30S subunit in the 70S ribosome.

Its function is as follows. One of the primary rRNA binding proteins. Required for association of the 30S and 50S subunits to form the 70S ribosome, for tRNA binding and peptide bond formation. It has been suggested to have peptidyltransferase activity; this is somewhat controversial. Makes several contacts with the 16S rRNA in the 70S ribosome. This is Large ribosomal subunit protein uL2 from Prochlorococcus marinus (strain MIT 9215).